The following is a 449-amino-acid chain: tRNA modification GTPase MnmE (449 aa).

(6S)-5-formyl-5,6,7,8-tetrahydrofolate contacts are provided by Arg24, Glu85, and Arg124. The region spanning 220-369 (GIRTAIAGPP…LEEAIIQAFS (150 aa)) is the TrmE-type G domain. Asn230 contacts K(+). GTP is bound by residues 230-235 (NVGKSS), 249-255 (SNIAGTT), and 274-277 (DTAG). Ser234 contacts Mg(2+). K(+) is bound by residues Ser249, Ile251, and Thr254. Mg(2+) is bound at residue Thr255. Lys449 serves as a coordination point for (6S)-5-formyl-5,6,7,8-tetrahydrofolate.

Belongs to the TRAFAC class TrmE-Era-EngA-EngB-Septin-like GTPase superfamily. TrmE GTPase family. As to quaternary structure, homodimer. Heterotetramer of two MnmE and two MnmG subunits. It depends on K(+) as a cofactor.

The protein resides in the cytoplasm. In terms of biological role, exhibits a very high intrinsic GTPase hydrolysis rate. Involved in the addition of a carboxymethylaminomethyl (cmnm) group at the wobble position (U34) of certain tRNAs, forming tRNA-cmnm(5)s(2)U34. In Akkermansia muciniphila (strain ATCC BAA-835 / DSM 22959 / JCM 33894 / BCRC 81048 / CCUG 64013 / CIP 107961 / Muc), this protein is tRNA modification GTPase MnmE.